Here is a 146-residue protein sequence, read N- to C-terminus: Angiogenin (146 aa).

Residues M1–A24 form the signal peptide. Q25 carries the post-translational modification Pyrrolidone carboxylic acid. H37 acts as the Proton acceptor in catalysis. R45 lines the tRNA pocket. 3 cysteine pairs are disulfide-bonded: C50/C105, C63/C116, and C81/C131. The short motif at R55–L59 is the Nucleolar localization signal element. Residues C105 and I127 each coordinate tRNA. The active-site Proton donor is H138.

It belongs to the pancreatic ribonuclease family. Homodimer. Interacts with RNH1; inhibiting ANG ribonuclease activity. Interacts with PCNA.

Its subcellular location is the secreted. It is found in the nucleus. The protein localises to the nucleolus. It localises to the cytoplasm. The protein resides in the stress granule. With respect to regulation, has weak tRNA ribonuclease activity by itself due to partial autoinhibition by its C-terminus, which folds into a short alpha-helix that partially occludes the substrate-binding site. In absence of stress, the ribonuclease activity is inhibited by RNH1 in the cytoplasm. In response to stress, dissociates from RNH1 in the cytoplasm and associates with cytoplasmic ribosomes with vacant A-sites: ribosomes directly activate the tRNA ribonuclease activity of ANG by refolding the C-terminal alpha-helix. In response to stress, the angiogenic activity of ANG is inhibited by RNH1 in the nucleus. In terms of biological role, secreted ribonuclease that can either promote or restrict cell proliferation of target cells, depending on the context. Endocytosed in target cells via its receptor PLXNB2 and translocates to the cytoplasm or nucleus. Under stress conditions, localizes to the cytoplasm and promotes the assembly of stress granules (SGs): specifically cleaves a subset of tRNAs within anticodon loops to produce tRNA-derived stress-induced fragments (tiRNAs), resulting in translation repression and inhibition of cell proliferation. tiRNas also prevent formation of apoptosome, thereby promoting cell survival. Preferentially cleaves RNAs between a pyrimidine and an adenosine residue, suggesting that it cleaves the anticodon loop of tRNA(Ala) (32-UUAGCAU-38) after positions 33 and 36. Cleaves a subset of tRNAs, including tRNA(Ala), tRNA(Glu), tRNA(Gly), tRNA(Lys), tRNA(Val), tRNA(His), tRNA(Asp) and tRNA(Sec). Under growth conditions and in differentiated cells, translocates to the nucleus and stimulates ribosomal RNA (rRNA) transcription, including that containing the initiation site sequences of 45S rRNA, thereby promoting cell growth and proliferation. Angiogenin induces vascularization of normal and malignant tissues via its ability to promote rRNA transcription. Involved in hematopoietic stem and progenitor cell (HSPC) growth and survival by promoting rRNA transcription in growth conditions and inhibiting translation in response to stress, respectively. Mediates the crosstalk between myeloid and intestinal epithelial cells to protect the intestinal epithelial barrier integrity: secreted by myeloid cells and promotes intestinal epithelial cells proliferation and survival. Also mediates osteoclast-endothelial cell crosstalk in growing bone: produced by osteoclasts and protects the neighboring vascular cells against senescence by promoting rRNA transcription. The chain is Angiogenin (ANG) from Trachypithecus francoisi (Francois' leaf monkey).